Consider the following 281-residue polypeptide: Shikimate dehydrogenase (NADP(+)) (281 aa).

Residues 14-16 and Thr-61 contribute to the shikimate site; that span reads SRS. The active-site Proton acceptor is Lys-65. Asn-86 and Asp-101 together coordinate shikimate. Residues 127–131, 151–156, and Val-216 contribute to the NADP(+) site; these read GAGGA and NRTLAR. Shikimate is bound at residue Tyr-218. Gly-239 is an NADP(+) binding site.

The protein belongs to the shikimate dehydrogenase family. Homodimer.

The catalysed reaction is shikimate + NADP(+) = 3-dehydroshikimate + NADPH + H(+). Its pathway is metabolic intermediate biosynthesis; chorismate biosynthesis; chorismate from D-erythrose 4-phosphate and phosphoenolpyruvate: step 4/7. In terms of biological role, involved in the biosynthesis of the chorismate, which leads to the biosynthesis of aromatic amino acids. Catalyzes the reversible NADPH linked reduction of 3-dehydroshikimate (DHSA) to yield shikimate (SA). This chain is Shikimate dehydrogenase (NADP(+)), found in Azorhizobium caulinodans (strain ATCC 43989 / DSM 5975 / JCM 20966 / LMG 6465 / NBRC 14845 / NCIMB 13405 / ORS 571).